The chain runs to 42 residues: Photosystem I reaction center subunit IX (42 aa).

The chain crosses the membrane as a helical span at residues 7 to 27 (YLSVAPVLSTLWFVALAGLLI).

It belongs to the PsaJ family.

The protein resides in the plastid. It localises to the chloroplast thylakoid membrane. Its function is as follows. May help in the organization of the PsaE and PsaF subunits. The sequence is that of Photosystem I reaction center subunit IX from Atropa belladonna (Belladonna).